The primary structure comprises 345 residues: NADPH dehydrogenase (345 aa).

23–26 lines the FMN pocket; the sequence is SPMC. Tyr28 provides a ligand contact to substrate. FMN-binding residues include Ala60 and Gln102. 164–167 serves as a coordination point for substrate; that stretch reads HGAH. Residues Arg215 and 307–308 contribute to the FMN site; that span reads GR.

The protein belongs to the NADH:flavin oxidoreductase/NADH oxidase family. NamA subfamily. In terms of assembly, homotetramer. FMN serves as cofactor.

The catalysed reaction is A + NADPH + H(+) = AH2 + NADP(+). Functionally, catalyzes the reduction of the double bond of an array of alpha,beta-unsaturated aldehydes and ketones. It also reduces the nitro group of nitroester and nitroaromatic compounds. It could have a role in detoxification processes. The polypeptide is NADPH dehydrogenase (Bacillus cereus (strain AH187)).